The sequence spans 157 residues: 3-dehydroquinate dehydratase (157 aa).

Y24 functions as the Proton acceptor in the catalytic mechanism. Substrate is bound by residues N75, H81, and D88. H101 functions as the Proton donor in the catalytic mechanism. Substrate contacts are provided by residues 102-103 (LS) and R112.

It belongs to the type-II 3-dehydroquinase family. Homododecamer.

It catalyses the reaction 3-dehydroquinate = 3-dehydroshikimate + H2O. It functions in the pathway metabolic intermediate biosynthesis; chorismate biosynthesis; chorismate from D-erythrose 4-phosphate and phosphoenolpyruvate: step 3/7. Catalyzes a trans-dehydration via an enolate intermediate. The sequence is that of 3-dehydroquinate dehydratase from Brucella canis (strain ATCC 23365 / NCTC 10854 / RM-666).